We begin with the raw amino-acid sequence, 379 residues long: Glutamate 5-kinase (379 aa).

An ATP-binding site is contributed by lysine 15. Substrate contacts are provided by serine 56, aspartate 143, and asparagine 155. 175–176 serves as a coordination point for ATP; the sequence is SD. Positions 281 to 358 constitute a PUA domain; the sequence is RGTLAIDAGA…SDAAQLLGVR (78 aa).

The protein belongs to the glutamate 5-kinase family.

Its subcellular location is the cytoplasm. It carries out the reaction L-glutamate + ATP = L-glutamyl 5-phosphate + ADP. It functions in the pathway amino-acid biosynthesis; L-proline biosynthesis; L-glutamate 5-semialdehyde from L-glutamate: step 1/2. Catalyzes the transfer of a phosphate group to glutamate to form L-glutamate 5-phosphate. This chain is Glutamate 5-kinase, found in Nitrobacter winogradskyi (strain ATCC 25391 / DSM 10237 / CIP 104748 / NCIMB 11846 / Nb-255).